A 577-amino-acid polypeptide reads, in one-letter code: CDPK-related kinase 7 (577 aa).

The tract at residues 1-38 (MGLCHGKPIEQQSKNLPISNEIEETPKNSSQKAKSSGF) is disordered. A lipid anchor (N-myristoyl glycine) is attached at Gly-2. The Protein kinase domain maps to 124-386 (YEIDGEVGRG…AAQALCHPWL (263 aa)). ATP-binding positions include 130–138 (VGRGHFGYT) and Lys-156. The active-site Proton acceptor is Asp-252. Ser-292 is modified (phosphoserine). Ser-334 is subject to Phosphoserine; by CPK1, CPK10 and CPK34. The interval 391–421 (ELKIPSDMIIYKLVKVYIMSSSLRKSALAAL) is autoinhibitory domain. The calmodulin binding (CaMBD) stretch occupies residues 410-430 (SSSLRKSALAALAKTLTVPQL). EF-hand domains are found at residues 428-464 (PQLT…STEA), 465-500 (TKDS…VYQL), 501-540 (EAME…GPSV), and 543-572 (HVVL…VSSR). Residues Ser-443, Asn-445, Tyr-447, Lys-484, Glu-489, Asp-520, Asn-522, Glu-529, Asp-554, and Lys-556 each coordinate Ca(2+). At Ser-558 the chain carries Phosphoserine.

Belongs to the protein kinase superfamily. Ser/Thr protein kinase family. CDPK subfamily. In terms of assembly, binds calmodulin (CaM) in a calcium-dependent manner. Autophosphorylated.

It is found in the membrane. It carries out the reaction L-seryl-[protein] + ATP = O-phospho-L-seryl-[protein] + ADP + H(+). The catalysed reaction is L-threonyl-[protein] + ATP = O-phospho-L-threonyl-[protein] + ADP + H(+). Activated by calcium and calmodulin. Autophosphorylation may play an important role in the regulation of the kinase activity. In terms of biological role, may play a role in signal transduction pathways that involve calcium as a second messenger. The chain is CDPK-related kinase 7 (CRK7) from Arabidopsis thaliana (Mouse-ear cress).